The chain runs to 323 residues: o-succinylbenzoate synthase (323 aa).

Catalysis depends on K134, which acts as the Proton donor. Residues D162, E191, and D214 each contribute to the Mg(2+) site. The active-site Proton acceptor is K236.

Belongs to the mandelate racemase/muconate lactonizing enzyme family. MenC type 1 subfamily. The cofactor is a divalent metal cation.

It carries out the reaction (1R,6R)-6-hydroxy-2-succinyl-cyclohexa-2,4-diene-1-carboxylate = 2-succinylbenzoate + H2O. It functions in the pathway quinol/quinone metabolism; 1,4-dihydroxy-2-naphthoate biosynthesis; 1,4-dihydroxy-2-naphthoate from chorismate: step 4/7. The protein operates within quinol/quinone metabolism; menaquinone biosynthesis. Functionally, converts 2-succinyl-6-hydroxy-2,4-cyclohexadiene-1-carboxylate (SHCHC) to 2-succinylbenzoate (OSB). The polypeptide is o-succinylbenzoate synthase (Photorhabdus laumondii subsp. laumondii (strain DSM 15139 / CIP 105565 / TT01) (Photorhabdus luminescens subsp. laumondii)).